A 298-amino-acid polypeptide reads, in one-letter code: 4-hydroxy-tetrahydrodipicolinate synthase (298 aa).

Pyruvate is bound at residue threonine 48. Tyrosine 137 functions as the Proton donor/acceptor in the catalytic mechanism. Lysine 166 (schiff-base intermediate with substrate) is an active-site residue. Isoleucine 207 is a binding site for pyruvate.

This sequence belongs to the DapA family. Homotetramer; dimer of dimers.

It is found in the cytoplasm. It catalyses the reaction L-aspartate 4-semialdehyde + pyruvate = (2S,4S)-4-hydroxy-2,3,4,5-tetrahydrodipicolinate + H2O + H(+). The protein operates within amino-acid biosynthesis; L-lysine biosynthesis via DAP pathway; (S)-tetrahydrodipicolinate from L-aspartate: step 3/4. Its function is as follows. Catalyzes the condensation of (S)-aspartate-beta-semialdehyde [(S)-ASA] and pyruvate to 4-hydroxy-tetrahydrodipicolinate (HTPA). The chain is 4-hydroxy-tetrahydrodipicolinate synthase from Campylobacter hominis (strain ATCC BAA-381 / DSM 21671 / CCUG 45161 / LMG 19568 / NCTC 13146 / CH001A).